Reading from the N-terminus, the 366-residue chain is tRNA/tmRNA (uracil-C(5))-methyltransferase (366 aa).

S-adenosyl-L-methionine contacts are provided by Gln-190, Tyr-218, Asn-223, Glu-239, and Asp-299. The Nucleophile role is filled by Cys-324. Catalysis depends on Glu-358, which acts as the Proton acceptor.

This sequence belongs to the class I-like SAM-binding methyltransferase superfamily. RNA M5U methyltransferase family. TrmA subfamily.

The catalysed reaction is uridine(54) in tRNA + S-adenosyl-L-methionine = 5-methyluridine(54) in tRNA + S-adenosyl-L-homocysteine + H(+). It catalyses the reaction uridine(341) in tmRNA + S-adenosyl-L-methionine = 5-methyluridine(341) in tmRNA + S-adenosyl-L-homocysteine + H(+). Its function is as follows. Dual-specificity methyltransferase that catalyzes the formation of 5-methyluridine at position 54 (m5U54) in all tRNAs, and that of position 341 (m5U341) in tmRNA (transfer-mRNA). This is tRNA/tmRNA (uracil-C(5))-methyltransferase from Salmonella paratyphi A (strain ATCC 9150 / SARB42).